We begin with the raw amino-acid sequence, 455 residues long: Glutamyl-tRNA reductase (455 aa).

Substrate contacts are provided by residues 49–52, Ser109, 114–116, and Gln120; these read TCNR and ETQ. Cys50 functions as the Nucleophile in the catalytic mechanism. Position 189–194 (189–194) interacts with NADP(+); sequence GAGKMG.

The protein belongs to the glutamyl-tRNA reductase family. Homodimer.

It carries out the reaction (S)-4-amino-5-oxopentanoate + tRNA(Glu) + NADP(+) = L-glutamyl-tRNA(Glu) + NADPH + H(+). It participates in porphyrin-containing compound metabolism; protoporphyrin-IX biosynthesis; 5-aminolevulinate from L-glutamyl-tRNA(Glu): step 1/2. Catalyzes the NADPH-dependent reduction of glutamyl-tRNA(Glu) to glutamate 1-semialdehyde (GSA). The protein is Glutamyl-tRNA reductase of Bacillus pumilus (strain SAFR-032).